We begin with the raw amino-acid sequence, 857 residues long: Leucine--tRNA ligase (857 aa).

The 'HIGH' region signature appears at Pro42–His52. Positions Lys617–Ser621 match the 'KMSKS' region motif. Lys620 is a binding site for ATP.

Belongs to the class-I aminoacyl-tRNA synthetase family.

It is found in the cytoplasm. It carries out the reaction tRNA(Leu) + L-leucine + ATP = L-leucyl-tRNA(Leu) + AMP + diphosphate. The polypeptide is Leucine--tRNA ligase (Vibrio parahaemolyticus serotype O3:K6 (strain RIMD 2210633)).